We begin with the raw amino-acid sequence, 478 residues long: Adenosylhomocysteinase (478 aa).

Substrate contacts are provided by Thr-67, Asp-144, and Glu-204. 205 to 207 (TTT) is a binding site for NAD(+). Substrate is bound by residues Lys-234 and Asp-238. NAD(+)-binding positions include Asn-239, 268–273 (GYGDVG), Glu-291, Asn-326, 347–349 (IGH), and Asn-392.

It belongs to the adenosylhomocysteinase family. Requires NAD(+) as cofactor.

Its subcellular location is the cytoplasm. The catalysed reaction is S-adenosyl-L-homocysteine + H2O = L-homocysteine + adenosine. The protein operates within amino-acid biosynthesis; L-homocysteine biosynthesis; L-homocysteine from S-adenosyl-L-homocysteine: step 1/1. May play a key role in the regulation of the intracellular concentration of adenosylhomocysteine. The protein is Adenosylhomocysteinase of Nitrosomonas eutropha (strain DSM 101675 / C91 / Nm57).